A 332-amino-acid chain; its full sequence is Arabinogalactan endo-beta-1,4-galactanase (332 aa).

Residue N111 is glycosylated (N-linked (GlcNAc...) asparagine). E135 functions as the Proton donor in the catalytic mechanism. E245 (nucleophile) is an active-site residue.

The protein belongs to the glycosyl hydrolase 53 family.

It catalyses the reaction The enzyme specifically hydrolyzes (1-&gt;4)-beta-D-galactosidic linkages in type I arabinogalactans.. The sequence is that of Arabinogalactan endo-beta-1,4-galactanase from Thermothelomyces thermophilus (Myceliophthora thermophila).